Here is a 376-residue protein sequence, read N- to C-terminus: Putative glutamate--cysteine ligase 2-1 (376 aa).

It belongs to the glutamate--cysteine ligase type 2 family. YbdK subfamily.

The enzyme catalyses L-cysteine + L-glutamate + ATP = gamma-L-glutamyl-L-cysteine + ADP + phosphate + H(+). In terms of biological role, ATP-dependent carboxylate-amine ligase which exhibits weak glutamate--cysteine ligase activity. This chain is Putative glutamate--cysteine ligase 2-1, found in Mycobacterium sp. (strain JLS).